A 400-amino-acid chain; its full sequence is S-adenosylmethionine synthase (400 aa).

H17 provides a ligand contact to ATP. D19 provides a ligand contact to Mg(2+). E45 is a K(+) binding site. 2 residues coordinate L-methionine: E58 and Q101. Positions 101–111 are flexible loop; the sequence is QSADIAMGVDQ. ATP is bound by residues 177 to 179, 244 to 245, D253, 259 to 260, A276, and K280; these read DGK, RF, and RK. D253 contributes to the L-methionine binding site. K284 contributes to the L-methionine binding site.

It belongs to the AdoMet synthase family. Homotetramer; dimer of dimers. It depends on Mg(2+) as a cofactor. K(+) is required as a cofactor.

The protein resides in the cytoplasm. It catalyses the reaction L-methionine + ATP + H2O = S-adenosyl-L-methionine + phosphate + diphosphate. It participates in amino-acid biosynthesis; S-adenosyl-L-methionine biosynthesis; S-adenosyl-L-methionine from L-methionine: step 1/1. Catalyzes the formation of S-adenosylmethionine (AdoMet) from methionine and ATP. The overall synthetic reaction is composed of two sequential steps, AdoMet formation and the subsequent tripolyphosphate hydrolysis which occurs prior to release of AdoMet from the enzyme. The protein is S-adenosylmethionine synthase of Bacillus subtilis (strain 168).